The primary structure comprises 247 residues: Adenylate kinase (247 aa).

ATP is bound at residue 42 to 47; sequence GAGKGT. Residues 62–91 are NMP; the sequence is ATGDMLRAQVTAKTELGVQAKKIMDQGGLV. AMP is bound by residues Thr63, Arg68, 89–91, 118–121, and Gln125; these read GLV and GFPR. The segment at 159-196 is LID; that stretch reads GRLVHPASGRSYHKLFNPPKKEMTDDQTGEPLVQRSDD. ATP contacts are provided by residues Arg160 and 169–170; that span reads SY. Residues 169-191 are disordered; it reads SYHKLFNPPKKEMTDDQTGEPLV. AMP contacts are provided by Arg193 and Arg204. Gln232 serves as a coordination point for ATP.

This sequence belongs to the adenylate kinase family. AK2 subfamily. Monomer.

It localises to the cytoplasm. The protein localises to the cytosol. The protein resides in the mitochondrion intermembrane space. The enzyme catalyses AMP + ATP = 2 ADP. Its function is as follows. Catalyzes the reversible transfer of the terminal phosphate group between ATP and AMP. Plays an important role in cellular energy homeostasis and in adenine nucleotide metabolism. Adenylate kinase activity is critical for regulation of the phosphate utilization and the AMP de novo biosynthesis pathways. The chain is Adenylate kinase from Meyerozyma guilliermondii (strain ATCC 6260 / CBS 566 / DSM 6381 / JCM 1539 / NBRC 10279 / NRRL Y-324) (Yeast).